The sequence spans 341 residues: Methionine import ATP-binding protein MetN 1 (341 aa).

The ABC transporter domain occupies 2–241; sequence IEFRQVSKTF…PKTTIAQNFV (240 aa). ATP is bound at residue 38–45; sequence GYSGAGKS.

The protein belongs to the ABC transporter superfamily. Methionine importer (TC 3.A.1.24) family. As to quaternary structure, the complex is composed of two ATP-binding proteins (MetN), two transmembrane proteins (MetI) and a solute-binding protein (MetQ).

The protein resides in the cell membrane. The catalysed reaction is L-methionine(out) + ATP + H2O = L-methionine(in) + ADP + phosphate + H(+). The enzyme catalyses D-methionine(out) + ATP + H2O = D-methionine(in) + ADP + phosphate + H(+). Its function is as follows. Part of the ABC transporter complex MetNIQ involved in methionine import. Responsible for energy coupling to the transport system. The protein is Methionine import ATP-binding protein MetN 1 of Staphylococcus aureus (strain MW2).